We begin with the raw amino-acid sequence, 735 residues long: Translation factor GUF1 homolog, chloroplastic (735 aa).

Disordered regions lie at residues 1–38 and 106–126; these read MAVP…PSTS and PENA…GVDN. The N-terminal 47 residues, 1–47, are a transit peptide targeting the chloroplast; the sequence is MAVPTIPSPACISQSANGSIISTRRSTETNPRQHPSTSYRCAGRVVR. Residues 11-38 show a composition bias toward polar residues; sequence CISQSANGSIISTRRSTETNPRQHPSTS. A compositionally biased stretch (basic and acidic residues) spans 106–115; it reads PENAEKDYSK. The tr-type G domain maps to 137-319; the sequence is SNIRNFSIIA…AVVKKIPPPK (183 aa). GTP-binding positions include 146 to 153, 212 to 216, and 266 to 269; these read AHIDHGKS, DTPGH, and NKID.

The protein belongs to the TRAFAC class translation factor GTPase superfamily. Classic translation factor GTPase family. LepA subfamily.

The protein localises to the plastid. The protein resides in the chloroplast. It carries out the reaction GTP + H2O = GDP + phosphate + H(+). Promotes chloroplast protein synthesis. May act as a fidelity factor of the translation reaction, by catalyzing a one-codon backward translocation of tRNAs on improperly translocated ribosomes. The protein is Translation factor GUF1 homolog, chloroplastic of Physcomitrium patens (Spreading-leaved earth moss).